The sequence spans 251 residues: tRNA (guanine-N(7)-)-methyltransferase (251 aa).

A disordered region spans residues 1–29; sequence MTQTLSSQDPQAPAAPPMPGAAGSAPADV. The S-adenosyl-L-methionine site is built by Glu-84, Glu-109, Asp-136, and Asp-159. Asp-159 is an active-site residue. Position 163 (Lys-163) interacts with substrate. The interval 165–170 is interaction with RNA; it reads RHNKRR. Residues Asp-195 and 230–233 contribute to the substrate site; that span reads TKFE.

It belongs to the class I-like SAM-binding methyltransferase superfamily. TrmB family.

It carries out the reaction guanosine(46) in tRNA + S-adenosyl-L-methionine = N(7)-methylguanosine(46) in tRNA + S-adenosyl-L-homocysteine. The protein operates within tRNA modification; N(7)-methylguanine-tRNA biosynthesis. Catalyzes the formation of N(7)-methylguanine at position 46 (m7G46) in tRNA. The polypeptide is tRNA (guanine-N(7)-)-methyltransferase (Acidovorax sp. (strain JS42)).